A 133-amino-acid chain; its full sequence is Fluoride-specific ion channel FluC (133 aa).

A run of 4 helical transmembrane segments spans residues 4–24 (LLWI…LSVL), 35–55 (WGTL…WVLA), 66–86 (VFIF…SLES), and 107–127 (VLGL…LGGP). G74 and T77 together coordinate Na(+).

It belongs to the fluoride channel Fluc/FEX (TC 1.A.43) family.

It is found in the cell inner membrane. It carries out the reaction fluoride(in) = fluoride(out). Its activity is regulated as follows. Na(+) is not transported, but it plays an essential structural role and its presence is essential for fluoride channel function. In terms of biological role, fluoride-specific ion channel. Important for reducing fluoride concentration in the cell, thus reducing its toxicity. The protein is Fluoride-specific ion channel FluC of Salinibacter ruber (strain DSM 13855 / M31).